Reading from the N-terminus, the 240-residue chain is Small ribosomal subunit protein uS3 (240 aa).

Residues 39–109 (IRQYVEKNLS…QIRINVVEVA (71 aa)) form the KH type-2 domain. Positions 214-240 (EEQAPAQPATTPKRQRRRQQFEDRSNE) are disordered.

This sequence belongs to the universal ribosomal protein uS3 family. In terms of assembly, part of the 30S ribosomal subunit. Forms a tight complex with proteins S10 and S14.

In terms of biological role, binds the lower part of the 30S subunit head. Binds mRNA in the 70S ribosome, positioning it for translation. This chain is Small ribosomal subunit protein uS3, found in Gloeothece citriformis (strain PCC 7424) (Cyanothece sp. (strain PCC 7424)).